The primary structure comprises 535 residues: Dimethylaniline monooxygenase [N-oxide-forming] 2 (535 aa).

FAD-binding positions include 9–13 (GAGVS), glutamate 32, 40–41 (LW), and 61–62 (NT). Residues 60 to 61 (TN) and 195 to 198 (SAAD) each bind NADP(+). Lysine 492 is covalently cross-linked (Glycyl lysine isopeptide (Lys-Gly) (interchain with G-Cter in SUMO)). Residues 510-530 (APVSFLIKVLGLLAIVLAFFF) form a helical membrane-spanning segment.

This sequence belongs to the FMO family. The cofactor is FAD. Requires Mg(2+) as cofactor.

The protein localises to the microsome membrane. It is found in the endoplasmic reticulum membrane. In terms of biological role, catalyzes the oxidative metabolism of numerous xenobiotics, including mainly therapeutic drugs and insecticides that contain a soft nucleophile, most commonly nitrogen and sulfur and participates to their bioactivation. This Rattus norvegicus (Rat) protein is Dimethylaniline monooxygenase [N-oxide-forming] 2.